The primary structure comprises 109 residues: Fluorescence recovery protein (109 aa).

Probably a dimer, interacts with the C-terminal domain of OCP-R.

The protein localises to the cellular thylakoid membrane. Its function is as follows. Destabilizes orange carotenoid protein-R form (OCP-R), the FRP-OCP interaction accelerates the OCP-R to OCP-O conversion. Increases fluorescence recovery following non-photochemical quenching (NPQ) by OCP, most probably by destabilizing OCP-R binding to the phycobilisome core. The chain is Fluorescence recovery protein (frp) from Synechocystis sp. (strain ATCC 27184 / PCC 6803 / Kazusa).